Consider the following 203-residue polypeptide: Urease accessory protein UreG (203 aa).

GTP is bound at residue 11–18 (GPVGSGKT).

This sequence belongs to the SIMIBI class G3E GTPase family. UreG subfamily. Homodimer. UreD, UreF and UreG form a complex that acts as a GTP-hydrolysis-dependent molecular chaperone, activating the urease apoprotein by helping to assemble the nickel containing metallocenter of UreC. The UreE protein probably delivers the nickel.

The protein resides in the cytoplasm. In terms of biological role, facilitates the functional incorporation of the urease nickel metallocenter. This process requires GTP hydrolysis, probably effectuated by UreG. This chain is Urease accessory protein UreG, found in Prochlorococcus marinus (strain MIT 9301).